A 72-amino-acid polypeptide reads, in one-letter code: Protein kish-A (72 aa).

The first 26 residues, 1-26 (MSAIFNFQSLLTVILLLICTCAYIRS), serve as a signal peptide directing secretion. The Extracellular segment spans residues 27–53 (LAPSLLDRNKTGLLGIFWKCARIGERK). Asn35 is a glycosylation site (N-linked (GlcNAc...) asparagine). The helical transmembrane segment at 54 to 71 (SPYVAVCCIVMAFSILFI) threads the bilayer. A topological domain (cytoplasmic) is located at residue Gln72.

It belongs to the KISH family.

It is found in the golgi apparatus membrane. In terms of biological role, involved in the early part of the secretory pathway. This chain is Protein kish-A (TMEM167A), found in Bos taurus (Bovine).